Consider the following 157-residue polypeptide: Ribonuclease (157 aa).

The N-terminal stretch at 1–34 is a signal peptide; sequence MMKMEGIALKKRLSWISVCLLVLVSAAGMLFSTA. Residues 35 to 47 constitute a propeptide that is removed on maturation; that stretch reads AKTETSSHKAHTE. The active-site Proton acceptor is Glu-120. The Proton donor role is filled by His-149.

The protein belongs to the ribonuclease N1/T1 family.

The protein localises to the secreted. Its function is as follows. Hydrolyzes phosphodiester bonds in RNA, poly- and oligoribonucleotides resulting in 3'-nucleoside monophosphates via 2',3'-cyclophosphate intermediates. The protein is Ribonuclease of Bacillus amyloliquefaciens (Bacillus velezensis).